The sequence spans 92 residues: Small ribosomal subunit protein uS19 (92 aa).

Belongs to the universal ribosomal protein uS19 family.

Protein S19 forms a complex with S13 that binds strongly to the 16S ribosomal RNA. The protein is Small ribosomal subunit protein uS19 of Bradyrhizobium diazoefficiens (strain JCM 10833 / BCRC 13528 / IAM 13628 / NBRC 14792 / USDA 110).